Reading from the N-terminus, the 90-residue chain is MKRIIASLALSVFCAGLAFAADELTFKAKNGDVKFPHKKHQQVVGNCKKCHEKGPGKIEGFGKDWAHKTCKGCHEEMKKGPTKCGDCHKK.

An N-terminal signal peptide occupies residues 1 to 20; sequence MKRIIASLALSVFCAGLAFA. 12 residues coordinate heme: histidine 37, histidine 40, cysteine 47, cysteine 50, histidine 51, histidine 67, cysteine 70, cysteine 73, histidine 74, cysteine 84, cysteine 87, and histidine 88.

Binds 3 heme groups per subunit.

In terms of biological role, may be involved in anaerobic iron respiration. This Geobacter metallireducens (strain ATCC 53774 / DSM 7210 / GS-15) protein is Cytochrome c7.